Reading from the N-terminus, the 200-residue chain is Pyridoxine/pyridoxamine 5'-phosphate oxidase (200 aa).

FMN-binding positions include 48–53 (RMVLLK), 63–64 (YT), Lys70, and Gln92. Lys53 is a substrate binding site. The substrate site is built by Tyr110, Arg114, and Ser118. FMN is bound by residues 127 to 128 (QS) and Trp171. Residue 177 to 179 (RLH) participates in substrate binding. Residue Arg181 participates in FMN binding.

It belongs to the pyridoxamine 5'-phosphate oxidase family. As to quaternary structure, homodimer. Requires FMN as cofactor.

It catalyses the reaction pyridoxamine 5'-phosphate + O2 + H2O = pyridoxal 5'-phosphate + H2O2 + NH4(+). The enzyme catalyses pyridoxine 5'-phosphate + O2 = pyridoxal 5'-phosphate + H2O2. It participates in cofactor metabolism; pyridoxal 5'-phosphate salvage; pyridoxal 5'-phosphate from pyridoxamine 5'-phosphate: step 1/1. Its pathway is cofactor metabolism; pyridoxal 5'-phosphate salvage; pyridoxal 5'-phosphate from pyridoxine 5'-phosphate: step 1/1. Its function is as follows. Catalyzes the oxidation of either pyridoxine 5'-phosphate (PNP) or pyridoxamine 5'-phosphate (PMP) into pyridoxal 5'-phosphate (PLP). This Cereibacter sphaeroides (strain ATCC 17023 / DSM 158 / JCM 6121 / CCUG 31486 / LMG 2827 / NBRC 12203 / NCIMB 8253 / ATH 2.4.1.) (Rhodobacter sphaeroides) protein is Pyridoxine/pyridoxamine 5'-phosphate oxidase.